Consider the following 102-residue polypeptide: Large ribosomal subunit protein bL21 (102 aa).

This sequence belongs to the bacterial ribosomal protein bL21 family. As to quaternary structure, part of the 50S ribosomal subunit. Contacts protein L20.

In terms of biological role, this protein binds to 23S rRNA in the presence of protein L20. The protein is Large ribosomal subunit protein bL21 of Shouchella clausii (strain KSM-K16) (Alkalihalobacillus clausii).